A 1506-amino-acid chain; its full sequence is Transcriptional repressor NF-X1 homolog (1506 aa).

The segment covering 1–12 (MEESQNIPPKTQ) has biased composition (polar residues). Disordered regions lie at residues 1–123 (MEES…NNQL), 142–164 (LKSESAKQQQQQQQQSLPTQEPT), and 181–282 (KAFV…KKDI). Low complexity-rich tracts occupy residues 13-103 (TLNN…SNSN) and 110-121 (HNNNYNNNNNNN). Over residues 194 to 209 (NNTNNNNNNNNNNNNN) the composition is skewed to low complexity. Residues 217–232 (DNNRPQRERRERKPKE) show a composition bias toward basic and acidic residues. Residues 240–252 (PQQPQQPQQPQPQ) are compositionally biased toward pro residues. A compositionally biased stretch (low complexity) spans 253–263 (PQQQQQSQQQQ). Over residues 267-282 (ENNRKKENKLQSKKDI) the composition is skewed to basic and acidic residues. The PHD-type zinc finger occupies 363-416 (IYECMVCFENVGKNAVIWSCSQCFTMFHSSCIKQWSSKSVTTEGKWKCPGCRYN). The RING-type; degenerate zinc finger occupies 366–414 (CMVCFENVGKNAVIWSCSQCFTMFHSSCIKQWSSKSVTTEGKWKCPGCR). 7 NF-X1-type zinc fingers span residues 460–478 (CPHSCTMLCHPGPCLNCSS), 515–534 (CGNHRCQQQCHSGSCSPCEV), 581–600 (CGNHKCQRTCHKGDCEPCSL), 642–661 (CKQHSCTDRCHTGPCGSCKV), 739–758 (CGVHKCQQLCHSGKCYNCYI), 796–817 (CGHSNEVWEHKCHSGPCPPCTY), and 852–868 (CLSHTCPRICHSGPCLI). Disordered regions lie at residues 897–1012 (QQSK…VDLN) and 1021–1040 (NEEEERIKKEEKEDDEDEDE). The span at 903-921 (TTTTTTTTTTSTTSTTSPK) shows a compositional bias: low complexity. A compositionally biased stretch (acidic residues) spans 925–934 (KDEELIEDDN). A compositionally biased stretch (low complexity) spans 935 to 980 (NNNNNNNNNNNNNNNNNNNNNNNNNNNNNNNNNNNNNNNNNNNNNN). Basic and acidic residues-rich tracts occupy residues 981–1002 (EKAEITNECNHDHDHEHEHSDD) and 1021–1031 (NEEEERIKKEE). The segment at 1062-1084 (CEHTCHQACHPGEPCPTNISCKQ) adopts an NF-X1-type 8 zinc-finger fold. Disordered regions lie at residues 1132 to 1167 (SHTLDNNPNNPNNPNNPNNNTTTTTTTTTTTTSSPT) and 1447 to 1473 (NQNQNQNNNNNNNNNNNNNSNINIKPT). Low complexity-rich tracts occupy residues 1137-1167 (NNPNNPNNPNNPNNNTTTTTTTTTTTTSSPT) and 1447-1470 (NQNQNQNNNNNNNNNNNNNSNINI).

Belongs to the NFX1 family.

It localises to the nucleus. May play a role in transcription regulation. This chain is Transcriptional repressor NF-X1 homolog (nfx1), found in Dictyostelium discoideum (Social amoeba).